We begin with the raw amino-acid sequence, 131 residues long: Putative gamma-taxilin 2 (131 aa).

The protein belongs to the taxilin family. Ubiquitously expressed.

This Homo sapiens (Human) protein is Putative gamma-taxilin 2 (TXLNGY).